Here is a 447-residue protein sequence, read N- to C-terminus: DNA primase DnaG (447 aa).

Residues 200–274 enclose the Toprim domain; the sequence is DSIIVVEGRA…DIDYVARAPE (75 aa). Residues E206, D248, and D250 each coordinate Mg(2+).

This sequence belongs to the archaeal DnaG primase family. As to quaternary structure, forms a ternary complex with MCM helicase and DNA. Component of the archaeal exosome complex. Mg(2+) serves as cofactor.

It catalyses the reaction ssDNA + n NTP = ssDNA/pppN(pN)n-1 hybrid + (n-1) diphosphate.. Functionally, RNA polymerase that catalyzes the synthesis of short RNA molecules used as primers for DNA polymerase during DNA replication. Also part of the exosome, which is a complex involved in RNA degradation. Acts as a poly(A)-binding protein that enhances the interaction between heteromeric, adenine-rich transcripts and the exosome. The chain is DNA primase DnaG from Pyrococcus abyssi (strain GE5 / Orsay).